The following is a 267-amino-acid chain: Thiamine thiazole synthase (267 aa).

NAD(+)-binding positions include Ser41, Glu60–Arg61, Gly68, Val132, and His160–Asp162. Asp162 and His177 together coordinate Fe cation. Residue Met227 coordinates NAD(+). A glycine-binding site is contributed by Arg237.

It belongs to the THI4 family. In terms of assembly, homooctamer; tetramer of dimers. It depends on Fe(2+) as a cofactor.

The catalysed reaction is hydrogen sulfide + glycine + NAD(+) = ADP-5-ethyl-4-methylthiazole-2-carboxylate + nicotinamide + 3 H2O + H(+). Its pathway is cofactor biosynthesis; thiamine diphosphate biosynthesis. Involved in the biosynthesis of the thiazole moiety of thiamine. Catalyzes the conversion of NAD and glycine to adenosine diphosphate 5-(2-hydroxyethyl)-4-methylthiazole-2-carboxylate (ADT), an adenylated thiazole intermediate, using free sulfide as a source of sulfur. This chain is Thiamine thiazole synthase, found in Saccharolobus islandicus (strain M.14.25 / Kamchatka #1) (Sulfolobus islandicus).